The following is a 247-amino-acid chain: Type III pantothenate kinase (247 aa).

Residue 7–14 coordinates ATP; the sequence is AIGNSRWH. Substrate contacts are provided by residues Tyr-91 and 95-98; that span reads GLDR. Catalysis depends on Asp-97, which acts as the Proton acceptor. Asp-117 provides a ligand contact to K(+). An ATP-binding site is contributed by Thr-120.

This sequence belongs to the type III pantothenate kinase family. Homodimer. NH4(+) serves as cofactor. K(+) is required as a cofactor.

It is found in the cytoplasm. It carries out the reaction (R)-pantothenate + ATP = (R)-4'-phosphopantothenate + ADP + H(+). It functions in the pathway cofactor biosynthesis; coenzyme A biosynthesis; CoA from (R)-pantothenate: step 1/5. In terms of biological role, catalyzes the phosphorylation of pantothenate (Pan), the first step in CoA biosynthesis. The chain is Type III pantothenate kinase from Synechococcus sp. (strain ATCC 27144 / PCC 6301 / SAUG 1402/1) (Anacystis nidulans).